Here is a 206-residue protein sequence, read N- to C-terminus: Large ribosomal subunit protein uL4 (206 aa).

The disordered stretch occupies residues 44–87 (NRQGTQSAKTRSEVSGGGRKPWRQKGTGHARQGSTRSPQWTGGG).

The protein belongs to the universal ribosomal protein uL4 family. As to quaternary structure, part of the 50S ribosomal subunit.

Its function is as follows. One of the primary rRNA binding proteins, this protein initially binds near the 5'-end of the 23S rRNA. It is important during the early stages of 50S assembly. It makes multiple contacts with different domains of the 23S rRNA in the assembled 50S subunit and ribosome. Functionally, forms part of the polypeptide exit tunnel. The sequence is that of Large ribosomal subunit protein uL4 from Lachnospira eligens (strain ATCC 27750 / DSM 3376 / VPI C15-48 / C15-B4) (Eubacterium eligens).